Consider the following 969-residue polypeptide: Isoleucine--tRNA ligase (969 aa).

A 'HIGH' region motif is present at residues 68-78 (PYANGALHMGH). An L-isoleucyl-5'-AMP-binding site is contributed by Glu585. Positions 626-630 (KMSKS) match the 'KMSKS' region motif. Lys629 provides a ligand contact to ATP. Cys939, Cys942, Cys959, and Cys962 together coordinate Zn(2+).

This sequence belongs to the class-I aminoacyl-tRNA synthetase family. IleS type 1 subfamily. In terms of assembly, monomer. It depends on Zn(2+) as a cofactor.

The protein resides in the cytoplasm. It catalyses the reaction tRNA(Ile) + L-isoleucine + ATP = L-isoleucyl-tRNA(Ile) + AMP + diphosphate. Functionally, catalyzes the attachment of isoleucine to tRNA(Ile). As IleRS can inadvertently accommodate and process structurally similar amino acids such as valine, to avoid such errors it has two additional distinct tRNA(Ile)-dependent editing activities. One activity is designated as 'pretransfer' editing and involves the hydrolysis of activated Val-AMP. The other activity is designated 'posttransfer' editing and involves deacylation of mischarged Val-tRNA(Ile). This is Isoleucine--tRNA ligase from Prochlorococcus marinus (strain MIT 9211).